Consider the following 425-residue polypeptide: Trigger factor (425 aa).

The PPIase FKBP-type domain occupies 163–248 (GDTAVIDFEG…IHEIKTKELP (86 aa)).

This sequence belongs to the FKBP-type PPIase family. Tig subfamily.

Its subcellular location is the cytoplasm. It carries out the reaction [protein]-peptidylproline (omega=180) = [protein]-peptidylproline (omega=0). Functionally, involved in protein export. Acts as a chaperone by maintaining the newly synthesized protein in an open conformation. Functions as a peptidyl-prolyl cis-trans isomerase. The chain is Trigger factor from Bacillus mycoides (strain KBAB4) (Bacillus weihenstephanensis).